Consider the following 411-residue polypeptide: Arginine deiminase (411 aa).

The Amidino-cysteine intermediate role is filled by C401.

This sequence belongs to the arginine deiminase family. Glycosylated.

It localises to the cytoplasm. It catalyses the reaction L-arginine + H2O = L-citrulline + NH4(+). It participates in amino-acid degradation; L-arginine degradation via ADI pathway; carbamoyl phosphate from L-arginine: step 1/2. This chain is Arginine deiminase (arcA), found in Streptococcus pyogenes serotype M1.